Reading from the N-terminus, the 190-residue chain is Ribonuclease HII (190 aa).

In terms of domain architecture, RNase H type-2 spans 1-190 (MAGVDEVGRG…FCRKIIENPD (190 aa)). A divalent metal cation contacts are provided by Asp5, Glu6, and Asp101.

This sequence belongs to the RNase HII family. Mn(2+) serves as cofactor. Mg(2+) is required as a cofactor.

Its subcellular location is the cytoplasm. The enzyme catalyses Endonucleolytic cleavage to 5'-phosphomonoester.. Functionally, endonuclease that specifically degrades the RNA of RNA-DNA hybrids. The protein is Ribonuclease HII (rnhB) of Synechocystis sp. (strain ATCC 27184 / PCC 6803 / Kazusa).